The primary structure comprises 493 residues: Putative BTB/POZ domain-containing protein L35 (493 aa).

One can recognise a BTB domain in the interval 16 to 87; that stretch reads TDLKLTLVDD…YLVDNKSEVD (72 aa).

It belongs to the mimivirus BTB/WD family.

The chain is Putative BTB/POZ domain-containing protein L35 from Acanthamoeba polyphaga (Amoeba).